We begin with the raw amino-acid sequence, 156 residues long: MNYDRIYPCDFVNGPGCRVVLFVTGCLHKCEGCYNRSTWNARNGQLFTMNTVKELASHLSKSYIQGLTLTGGDPLYPQNREEISNLVSWVKARFPEKDIWLWTGYKFEDIKQLEMLKYVDVIIDGKYEKNLPTKKLWRGSDNQRLWSNTDGVWKHD.

Positions 26, 30, and 33 each coordinate [4Fe-4S] cluster. S-adenosyl-L-methionine is bound by residues Gly32–Tyr34 and Gly72.

It belongs to the organic radical-activating enzymes family. Forms a tetramer composed of two NrdD and two NrdG subunits. The cofactor is [4Fe-4S] cluster.

The catalysed reaction is glycyl-[protein] + reduced [flavodoxin] + S-adenosyl-L-methionine = glycin-2-yl radical-[protein] + semiquinone [flavodoxin] + 5'-deoxyadenosine + L-methionine + H(+). Functionally, activation of anaerobic ribonucleoside-triphosphate reductase under anaerobic conditions by generation of an organic free radical, using S-adenosylmethionine and reduced flavodoxin as cosubstrates to produce 5'-deoxy-adenosine. This is Anaerobic ribonucleoside-triphosphate reductase-activating protein (NRDG) from Escherichia coli (Bacteriophage T4).